Here is a 376-residue protein sequence, read N- to C-terminus: MAEQMQISRRTILAGAALAGALAPVLATTSAWGQGAVRKATAAEIAALPRQKVELVDPPFVHAHSQVAEGGPKVVEFTMVIEEKKIVIDDAGTEVHAMAFNGTVPGPLMVVHQDDYLELTLINPETNTLMHNIDFHAATGALGGGGLTEINPGEKTILRFKATKPGVFVYHCAPPGMVPWHVVSGMNGAIMVLPREGLHDGKGKALTYDKIYYVGEQDFYVPRDENGKYKKYEAPGDAYEDTVKVMRTLTPTHVVFNGAVGALTGDKAMTAAVGEKVLIVHSQANRDTRPHLIGGHGDYVWATGKFNTPPDVDQETWFIPGGAAGAAFYTFQQPGIYAYVNHNLIEAFELGAAAHFKVTGEWNDDLMTSVLAPSGT.

Positions 1–33 (MAEQMQISRRTILAGAALAGALAPVLATTSAWG) form a signal peptide, tat-type signal. A Pyrrolidone carboxylic acid modification is found at Gln-34. Plastocyanin-like domains are found at residues 34 to 211 (QGAV…YDKI) and 212 to 376 (YYVG…PSGT). Cu cation-binding residues include His-131, His-136, His-171, Cys-172, His-181, Met-186, and His-342.

It belongs to the multicopper oxidase family. Homotrimer. Cu(2+) serves as cofactor. It depends on Cu(+) as a cofactor. FAD is required as a cofactor. Post-translationally, predicted to be exported by the Tat system. The position of the signal peptide cleavage has been experimentally proven.

The protein localises to the periplasm. The enzyme catalyses nitric oxide + Fe(III)-[cytochrome c] + H2O = Fe(II)-[cytochrome c] + nitrite + 2 H(+). It functions in the pathway nitrogen metabolism; nitrate reduction (denitrification); dinitrogen from nitrate: step 2/4. This chain is Copper-containing nitrite reductase (nirK), found in Alcaligenes faecalis.